The following is a 748-amino-acid chain: 5-methyltetrahydropteroyltriglutamate--homocysteine methyltransferase (748 aa).

Residues 18–21 (REWK) and Lys-112 each bind 5-methyltetrahydropteroyltri-L-glutamate. L-homocysteine-binding positions include 420–422 (IGS) and Glu-473. L-methionine-binding positions include 420–422 (IGS) and Glu-473. Trp-550 is a 5-methyltetrahydropteroyltri-L-glutamate binding site. Asp-588 is an L-homocysteine binding site. Asp-588 is an L-methionine binding site. Glu-594 contributes to the 5-methyltetrahydropteroyltri-L-glutamate binding site. Residues His-630, Cys-632, and Glu-654 each coordinate Zn(2+). His-683 functions as the Proton donor in the catalytic mechanism. Position 715 (Cys-715) interacts with Zn(2+).

Belongs to the vitamin-B12 independent methionine synthase family. Requires Zn(2+) as cofactor.

The enzyme catalyses 5-methyltetrahydropteroyltri-L-glutamate + L-homocysteine = tetrahydropteroyltri-L-glutamate + L-methionine. The protein operates within amino-acid biosynthesis; L-methionine biosynthesis via de novo pathway; L-methionine from L-homocysteine (MetE route): step 1/1. Catalyzes the transfer of a methyl group from 5-methyltetrahydrofolate to homocysteine resulting in methionine formation. The sequence is that of 5-methyltetrahydropteroyltriglutamate--homocysteine methyltransferase from Staphylococcus epidermidis (strain ATCC 35984 / DSM 28319 / BCRC 17069 / CCUG 31568 / BM 3577 / RP62A).